The following is a 454-amino-acid chain: Chromosomal replication initiator protein DnaA (454 aa).

The domain I, interacts with DnaA modulators stretch occupies residues 1–74 (MFDLDKFWQF…IQEAYAYADM (74 aa)). The tract at residues 74–116 (MEIQPKFEVAGKEGPERLVTPQPRIKTNQEILENRRDEFAQDL) is domain II. The segment at 117 to 333 (QLNSKYTFDT…GALVKVQAHA (217 aa)) is domain III, AAA+ region. ATP contacts are provided by G161, G163, K164, and T165. The tract at residues 334–454 (TIEREDINVD…VYDLKAMLEH (121 aa)) is domain IV, binds dsDNA.

Belongs to the DnaA family. Oligomerizes as a right-handed, spiral filament on DNA at oriC.

It is found in the cytoplasm. Its function is as follows. Plays an essential role in the initiation and regulation of chromosomal replication. ATP-DnaA binds to the origin of replication (oriC) to initiate formation of the DNA replication initiation complex once per cell cycle. Binds the DnaA box (a 9 base pair repeat at the origin) and separates the double-stranded (ds)DNA. Forms a right-handed helical filament on oriC DNA; dsDNA binds to the exterior of the filament while single-stranded (ss)DNA is stabiized in the filament's interior. The ATP-DnaA-oriC complex binds and stabilizes one strand of the AT-rich DNA unwinding element (DUE), permitting loading of DNA polymerase. After initiation quickly degrades to an ADP-DnaA complex that is not apt for DNA replication. Binds acidic phospholipids. This is Chromosomal replication initiator protein DnaA from Lactobacillus johnsonii (strain CNCM I-12250 / La1 / NCC 533).